We begin with the raw amino-acid sequence, 55 residues long: ATP synthase F(0) complex subunit 8 (55 aa).

A helical membrane pass occupies residues 7 to 29 (NPWFYIMLMSWLTFSLIIQPELL).

It belongs to the ATPase protein 8 family. As to quaternary structure, component of the ATP synthase complex composed at least of ATP5F1A/subunit alpha, ATP5F1B/subunit beta, ATP5MC1/subunit c (homooctomer), MT-ATP6/subunit a, MT-ATP8/subunit 8, ATP5ME/subunit e, ATP5MF/subunit f, ATP5MG/subunit g, ATP5MK/subunit k, ATP5MJ/subunit j, ATP5F1C/subunit gamma, ATP5F1D/subunit delta, ATP5F1E/subunit epsilon, ATP5PF/subunit F6, ATP5PB/subunit b, ATP5PD/subunit d, ATP5PO/subunit OSCP. ATP synthase complex consists of a soluble F(1) head domain (subunits alpha(3) and beta(3)) - the catalytic core - and a membrane F(0) domain - the membrane proton channel (subunits c, a, 8, e, f, g, k and j). These two domains are linked by a central stalk (subunits gamma, delta, and epsilon) rotating inside the F1 region and a stationary peripheral stalk (subunits F6, b, d, and OSCP).

The protein localises to the mitochondrion membrane. Functionally, subunit 8, of the mitochondrial membrane ATP synthase complex (F(1)F(0) ATP synthase or Complex V) that produces ATP from ADP in the presence of a proton gradient across the membrane which is generated by electron transport complexes of the respiratory chain. ATP synthase complex consist of a soluble F(1) head domain - the catalytic core - and a membrane F(1) domain - the membrane proton channel. These two domains are linked by a central stalk rotating inside the F(1) region and a stationary peripheral stalk. During catalysis, ATP synthesis in the catalytic domain of F(1) is coupled via a rotary mechanism of the central stalk subunits to proton translocation. In vivo, can only synthesize ATP although its ATP hydrolase activity can be activated artificially in vitro. Part of the complex F(0) domain. The sequence is that of ATP synthase F(0) complex subunit 8 from Musophaga violacea (Violet turaco).